The chain runs to 172 residues: Large ribosomal subunit protein uL10 (172 aa).

The protein belongs to the universal ribosomal protein uL10 family. Part of the ribosomal stalk of the 50S ribosomal subunit. The N-terminus interacts with L11 and the large rRNA to form the base of the stalk. The C-terminus forms an elongated spine to which L12 dimers bind in a sequential fashion forming a multimeric L10(L12)X complex.

Its function is as follows. Forms part of the ribosomal stalk, playing a central role in the interaction of the ribosome with GTP-bound translation factors. The sequence is that of Large ribosomal subunit protein uL10 from Bradyrhizobium sp. (strain ORS 278).